The sequence spans 352 residues: Dysbindin (352 aa).

The residue at position 11 (Ser11) is a Phosphoserine. The stretch at 92 to 180 forms a coiled coil; sequence TSLAELQEQL…AELDTEHAQK (89 aa). The short motif at 243 to 256 is the Nuclear export signal element; that stretch reads LMDLSDQEALDVFL. The interval 267-352 is disordered; that stretch reads SPGLEMESNP…SDQCDSTQDI (86 aa). The segment covering 274–285 has biased composition (polar residues); the sequence is SNPSQNEMNLQI. The segment covering 286-301 has biased composition (low complexity); that stretch reads PNPSESASQPPASPSA. Phosphoserine is present on residues Ser340 and Ser343.

The protein belongs to the dysbindin family. As to quaternary structure, interacts (via its coiled coil domain) with KXD1. Interacts with AP3B2, TRIM32, CMYA5, PI4K2 and RNF151. Interacts with the DNA-dependent protein kinase complex DNA-PK; the interaction phosphorylates DTNBP1 in vitro. Interacts directly in this complex with XRCC5 and XRCC6. Interacts with XPO1; the interaction exports DTNBP1 out of the nucleus. Component of the biogenesis of lysosome-related organelles complex 1 (BLOC-1) composed of at least BLOC1S1, BLOC1S2, BLOC1S3, BLOC1S4, BLOC1S5, BLOC1S6, DTNBP1/BLOC1S7 and SNAPIN/BLOC1S8. Interacts directly in the complex with BLOC1S5, BLOC1S6 and SNAPIN/BLOC1S8. The BLOC-1 complex associates with the AP-3 protein complex and membrane protein cargos. This BLOC-1 complex also associates with the BLOC-2 complex in endosomes. Binds to DTNA and DTNB but may not be a physiological binding partner. Interacts with AP3M1. Ubiquitinated by TRIM32. Ubiquitination leads to DTNBP1 degradation. In terms of tissue distribution, detected in hippocampus neurons (at protein level). Ubiquitously expressed. The highest expression is observed in testis, liver, kidney, brain, heart and lung. In the brain, found primarily in axon bundles and axon terminals, notably in the cerebellum and hippocampus. Expressed at lower levels in stomach, small intestine and skeletal muscle, where it is detected at the sarcolemma.

The protein resides in the cytoplasm. The protein localises to the cytoplasmic vesicle membrane. It is found in the cytoplasmic vesicle. It localises to the secretory vesicle. Its subcellular location is the synaptic vesicle membrane. The protein resides in the endosome membrane. The protein localises to the melanosome membrane. It is found in the nucleus. It localises to the postsynaptic density. Its subcellular location is the presynaptic cell membrane. The protein resides in the endoplasmic reticulum. In terms of biological role, component of the BLOC-1 complex, a complex that is required for normal biogenesis of lysosome-related organelles (LRO), such as platelet dense granules and melanosomes. In concert with the AP-3 complex, the BLOC-1 complex is required to target membrane protein cargos into vesicles assembled at cell bodies for delivery into neurites and nerve terminals. The BLOC-1 complex, in association with SNARE proteins, is also proposed to be involved in neurite extension. Associates with the BLOC-2 complex to facilitate the transport of TYRP1 independent of AP-3 function. Plays a role in synaptic vesicle trafficking and in neurotransmitter release. Plays a role in the regulation of cell surface exposure of DRD2. May play a role in actin cytoskeleton reorganization and neurite outgrowth. May modulate MAPK8 phosphorylation. Appears to promote neuronal transmission and viability through regulating the expression of SNAP25 and SYN1, modulating PI3-kinase-Akt signaling and influencing glutamatergic release. Regulates the expression of SYN1 through binding to its promoter. Modulates prefrontal cortical activity via the dopamine/D2 pathway. This chain is Dysbindin (Dtnbp1), found in Rattus norvegicus (Rat).